A 159-amino-acid chain; its full sequence is Growth arrest and DNA damage-inducible protein GADD45 gamma (159 aa).

Residues 43–86 (VYESAKVLNVDPDNVTFCVLAADEEDEGDIALQIHFTLIQAFCC) are homodimerization.

It belongs to the GADD45 family. In terms of assembly, undergoes concentration-dependent homodimerization, which is required for growth inhibititory activity and enhances interaction with PCNA. Interacts with GADD45GIP1. Interacts with PCNA.

Involved in the regulation of growth and apoptosis. Mediates activation of stress-responsive MTK1/MEKK4 MAPKKK. The sequence is that of Growth arrest and DNA damage-inducible protein GADD45 gamma (Gadd45g) from Mus musculus (Mouse).